A 179-amino-acid chain; its full sequence is Large ribosomal subunit protein uL5 (179 aa).

This sequence belongs to the universal ribosomal protein uL5 family. Part of the 50S ribosomal subunit; part of the 5S rRNA/L5/L18/L25 subcomplex. Contacts the 5S rRNA and the P site tRNA. Forms a bridge to the 30S subunit in the 70S ribosome.

In terms of biological role, this is one of the proteins that bind and probably mediate the attachment of the 5S RNA into the large ribosomal subunit, where it forms part of the central protuberance. In the 70S ribosome it contacts protein S13 of the 30S subunit (bridge B1b), connecting the 2 subunits; this bridge is implicated in subunit movement. Contacts the P site tRNA; the 5S rRNA and some of its associated proteins might help stabilize positioning of ribosome-bound tRNAs. This is Large ribosomal subunit protein uL5 from Burkholderia ambifaria (strain MC40-6).